We begin with the raw amino-acid sequence, 600 residues long: MFGCQCPRKKKGTMTMMRLRTASLRSLNLDMRCTIRLLDDTEISFNIQRDTKGQFLLDYICNHYNLLEKDYFGIRFVDPEKQRHWLDPSKPVAKQMKSHPPYTMCFRVKFYPHEPLKIKEELTRYLLYLQIKRDIFHGRLLCCFADAAFLGACIVQAEIGDYDPDEHPDNYICDFKIFPKQSQKLERKIVEIHKNELRGQSPSVSEFNLLLKAHSLETYGVDPHPCKDSTGTTTFLGYTAAGFVVFQGNKRIHLIKWPDICKMKFDGKTFHVVVMQKEKKNILTYHTSTPAACKHLWKCGVENQAFYKYAKSSQVKTVTSSNIFFKGSRFRYCGKVAKEVVEASSKIQRDPPEVHRSLIPHSRSSYSLNKQLIINMEPLQPLIPSPNEEEEEEEEENQIDEGILLLQQSEASSAPVLGNSPARGLETTADVTHDEEESIREEPLTISEQVYNPSASLLPTPVDEGIDMLFNSPLRAEREKDDTDSFEDLEADEHAFLIAEEEEMKEARKALSWSYNFIMGNMQLNAFLKSFSKLLLAAIGLLMVVLPLLLILLESDIDVSFLREIRLTPEFEQFHHEYYCPFRKWVACKLSAALNLFGST.

The 281-residue stretch at 31–311 (MRCTIRLLDD…ENQAFYKYAK (281 aa)) folds into the FERM domain. Residues 413 to 440 (SAPVLGNSPARGLETTADVTHDEEESIR) form a disordered region. Residues 534-554 (LLLAAIGLLMVVLPLLLILLE) form a helical membrane-spanning segment.

It is found in the membrane. This Xenopus tropicalis (Western clawed frog) protein is FERM domain-containing protein 3 (frmd3).